Here is a 252-residue protein sequence, read N- to C-terminus: Ubiquinone biosynthesis protein COQ4 homolog 2, mitochondrial (252 aa).

Zn(2+) is bound by residues His130, Asp131, His134, and Glu146.

Belongs to the COQ4 family. As to quaternary structure, component of a multi-subunit COQ enzyme complex. It depends on Zn(2+) as a cofactor.

The protein resides in the mitochondrion inner membrane. The enzyme catalyses a 4-hydroxy-3-methoxy-5-(all-trans-polyprenyl)benzoate + H(+) = a 2-methoxy-6-(all-trans-polyprenyl)phenol + CO2. Its pathway is cofactor biosynthesis; ubiquinone biosynthesis. Functionally, lyase that catalyzes the C1-decarboxylation of 4-hydroxy-3-methoxy-5-(all-trans-polyprenyl)benzoic acid into 2-methoxy-6-(all-trans-polyprenyl)phenol during ubiquinone biosynthesis. This chain is Ubiquinone biosynthesis protein COQ4 homolog 2, mitochondrial, found in Trypanosoma cruzi (strain CL Brener).